A 230-amino-acid chain; its full sequence is Ephrin-A3 (230 aa).

An N-terminal signal peptide occupies residues 1-22 (MAAAPLLLLLLLVPVPLLPLLA). The 132-residue stretch at 30–161 (GNRHAVYWNS…RMKVFVCCAS (132 aa)) folds into the Ephrin RBD domain. Residues Asn38, Asn67, Asn84, and Asn92 are each glycosylated (N-linked (GlcNAc...) asparagine). Cystine bridges form between Cys63–Cys102 and Cys91–Cys150. Residue Gly206 is the site of GPI-anchor amidated glycine attachment. Residues 207-230 (TSPKREHLPLAVGIAFFLMTLLAS) constitute a propeptide, removed in mature form.

This sequence belongs to the ephrin family. Interacts with EPHA8; activates EPHA8. Expressed in myogenic progenitor cells.

It localises to the cell membrane. Cell surface GPI-bound ligand for Eph receptors, a family of receptor tyrosine kinases which are crucial for migration, repulsion and adhesion during neuronal, vascular and epithelial development. Binds promiscuously Eph receptors residing on adjacent cells, leading to contact-dependent bidirectional signaling into neighboring cells. The signaling pathway downstream of the receptor is referred to as forward signaling while the signaling pathway downstream of the ephrin ligand is referred to as reverse signaling. The chain is Ephrin-A3 (Efna3) from Mus musculus (Mouse).